The following is a 481-amino-acid chain: Proline--tRNA ligase 2 (481 aa).

The protein belongs to the class-II aminoacyl-tRNA synthetase family. ProS type 3 subfamily. As to quaternary structure, homodimer.

The protein localises to the cytoplasm. It carries out the reaction tRNA(Pro) + L-proline + ATP = L-prolyl-tRNA(Pro) + AMP + diphosphate. Its function is as follows. Catalyzes the attachment of proline to tRNA(Pro) in a two-step reaction: proline is first activated by ATP to form Pro-AMP and then transferred to the acceptor end of tRNA(Pro). This Clostridioides difficile (strain 630) (Peptoclostridium difficile) protein is Proline--tRNA ligase 2.